The following is a 173-amino-acid chain: NADH-ubiquinone oxidoreductase chain 6 (173 aa).

A run of 5 helical transmembrane segments spans residues 1 to 21 (MTYF…AVAS), 27 to 47 (YGVV…LSLG), 48 to 68 (VSFV…VVFV), 91 to 111 (GVGF…IGCL), and 141 to 161 (VGMF…VLEL).

The protein belongs to the complex I subunit 6 family.

Its subcellular location is the mitochondrion membrane. The catalysed reaction is a ubiquinone + NADH + 5 H(+)(in) = a ubiquinol + NAD(+) + 4 H(+)(out). Core subunit of the mitochondrial membrane respiratory chain NADH dehydrogenase (Complex I) that is believed to belong to the minimal assembly required for catalysis. Complex I functions in the transfer of electrons from NADH to the respiratory chain. The immediate electron acceptor for the enzyme is believed to be ubiquinone. The protein is NADH-ubiquinone oxidoreductase chain 6 (MT-ND6) of Fratercula arctica (Atlantic puffin).